A 1338-amino-acid chain; its full sequence is Thioester-containing protein 1 allele S3 (1338 aa).

An N-terminal signal peptide occupies residues 1–21; the sequence is MWQFIRSRILTVIIFIGAAHG. Residues asparagine 68, asparagine 199, asparagine 242, asparagine 312, and asparagine 481 are each glycosylated (N-linked (GlcNAc...) asparagine). The interval 580 to 609 is may contain the cleavage site; the sequence is ENEFDIFHSLGLFARTLDDILFDSANEKTG. N-linked (GlcNAc...) asparagine glycans are attached at residues asparagine 637, asparagine 728, asparagine 813, and asparagine 828. The segment at residues 859 to 862 is a cross-link (isoglutamyl cysteine thioester (Cys-Gln)); it reads CGEQ. 3 disulfides stabilise this stretch: cysteine 1217-cysteine 1283, cysteine 1326-cysteine 1338, and cysteine 1329-cysteine 1334.

As to quaternary structure, heterodimer of a TEP1-N chain and an TEP1-C chain non-covalently linked. Forms a complex composed of TEP1-N and TEP1-C heterodimer, LRIM1 and APL1C; the interaction stabilizes TEP1-N and TEP1-C heterodimer, prevents its binding to tissues while circulating in the hemolymph and protects the thioester bond from hydrolysis. Mature TEP1 and to a lesser extent full-length TEP1 interact with SPCLIP1; the interaction is induced by microbial infection. Post-translationally, in the hemolymph, the full-length protein is cleaved by an unknow protease into a 75kDa N-terminal (TEP1-N) chain and an 80kDa C-terminal (TEP1-C) chain which remain non-covalently linked. The TEP1-C chain contains the thioester bond which covalently binds to the pathogen surface. Cleavage is induced by bacterial infection or aseptic wound injury. During embryonic and pupal development, the cleaved form is the predominant form. N-glycosylated.

It is found in the secreted. In terms of biological role, plays an essential role in the innate immune response against bacteria, fungi and protozoa infection. After proteolytic cleavage, the protein C-terminus binds covalently through a thioester bond to the pathogen surface resulting in pathogen clearance either by melanization or lysis. Initiate the recruitment and activation of a cascade of proteases, mostly of CLIP-domain serine proteases, which leads to the proteolytic cleavage of the prophenoloxidase (PPO) into active phenoloxidase (PO), the rate-limiting enzyme in melanin biosynthesis. In response to parasite P.berghei-mediated infection, binds to and mediates killing of ookinetes, as they egress from midgut epithelial cells into the basal labyrinth, by both lysis and melanization. During bacterial infection, binds to both Gram-positive and Gram-negative bacteria but only promotes phagocytosis of Gram-negative bacteria. Promotes the accumulation of SPCLIP1 onto the surface of P.berghei ookinetes and bacterium E.coli which leads to the melanization of the pathogen. Recruits CLIPA2 to bacteria surface. In response to bacterial infection, required for periostial hemocyte aggregation, but not for the aggregation of sessile hemocytes in non-periostial regions. During the late stage of fungus B.bassiana-mediated infection, required for the initiation of hyphae melanization by binding to the surface of hyphae and recruiting prophenoloxidase PPO to them. Plays a role in male fertility by binding to defective sperm cells and promoting their removal during spermatogenesis. Its function is as follows. Binds to and mediates killing of parasite P.bergei ookinetes by lysis. Functionally, binds covalently through a thioester bond to the pathogen surface resulting in pathogen clearance. This chain is Thioester-containing protein 1 allele S3, found in Anopheles gambiae (African malaria mosquito).